Reading from the N-terminus, the 173-residue chain is 2-C-methyl-D-erythritol 2,4-cyclodiphosphate synthase (173 aa).

Residues aspartate 17 and histidine 19 each coordinate a divalent metal cation. Residues 17–19 and 49–50 contribute to the 4-CDP-2-C-methyl-D-erythritol 2-phosphate site; these read DVH and HS. A divalent metal cation is bound at residue histidine 57. 4-CDP-2-C-methyl-D-erythritol 2-phosphate contacts are provided by residues 76–80, 147–150, phenylalanine 154, and arginine 157; these read FPNTD and TTTE.

The protein belongs to the IspF family. As to quaternary structure, homotrimer. The cofactor is a divalent metal cation.

It carries out the reaction 4-CDP-2-C-methyl-D-erythritol 2-phosphate = 2-C-methyl-D-erythritol 2,4-cyclic diphosphate + CMP. It participates in isoprenoid biosynthesis; isopentenyl diphosphate biosynthesis via DXP pathway; isopentenyl diphosphate from 1-deoxy-D-xylulose 5-phosphate: step 4/6. In terms of biological role, involved in the biosynthesis of isopentenyl diphosphate (IPP) and dimethylallyl diphosphate (DMAPP), two major building blocks of isoprenoid compounds. Catalyzes the conversion of 4-diphosphocytidyl-2-C-methyl-D-erythritol 2-phosphate (CDP-ME2P) to 2-C-methyl-D-erythritol 2,4-cyclodiphosphate (ME-CPP) with a corresponding release of cytidine 5-monophosphate (CMP). The protein is 2-C-methyl-D-erythritol 2,4-cyclodiphosphate synthase of Ehrlichia chaffeensis (strain ATCC CRL-10679 / Arkansas).